A 398-amino-acid chain; its full sequence is Phospholipase C (398 aa).

A signal peptide spans 1 to 28 (MKRKIYKLLICATIATSLWAVRTTKVYA). 9 residues coordinate Zn(2+): tryptophan 29, histidine 39, aspartate 84, histidine 96, histidine 154, aspartate 158, histidine 164, histidine 176, and glutamate 180. In terms of domain architecture, Zn-dependent PLC spans 29 to 278 (WDGKADGTGT…HDVSDGKDSS (250 aa)). Residues 275–283 (KDSSANKNV) form a linker region. A PLAT domain is found at 284–398 (NELVAYITTG…ISGNSTYNIK (115 aa)). Ca(2+) is bound by residues glycine 299, threonine 300, aspartate 301, aspartate 321, asparagine 322, glycine 324, asparagine 325, aspartate 326, and aspartate 365.

Requires Ca(2+) as cofactor. It depends on Zn(2+) as a cofactor.

It localises to the secreted. It carries out the reaction a 1,2-diacyl-sn-glycero-3-phosphocholine + H2O = phosphocholine + a 1,2-diacyl-sn-glycerol + H(+). Bacterial hemolysins are exotoxins that attack blood cell membranes and cause cell rupture. Constitutes an essential virulence factor in gas gangrene. Binds to eukaryotic membranes where it hydrolyzes both phosphatidylcholine and sphingomyelin, causing cell rupture. The diacylglycerol produced can activate both the arachidonic acid pathway, leading to modulation of the inflammatory response cascade and thrombosis, and protein kinase C, leading to activation of eukaryotic phospholipases and further membrane damage. In Clostridium perfringens, this protein is Phospholipase C (plc).